A 558-amino-acid polypeptide reads, in one-letter code: MSAELAPPPPLAPGGLRVTALGGISEIGRNMTVFEHLGRLLIVDCGVLFPGHDEPGVDLILPDLRHIEDRLDEIEALVVTHAHEDHIGAIPFLLKLRPDIPVVGSKFTIALVREKCREHRLKPKFVEVAERQSSQHGVFECEYFAVNHSIPGCLAVAIHTGAGTVLHTGDIKLDQLPLDGRPTDLPGMSRLGDAGVDLFLCDSTNSEHPGVSPSESEVGPTLHRLIRGAEGRVIVACFASNVDRVQQIIDAAVALGRRVSFVGRSMVRNMGIARELGYLKVDDSDILDIAAAEMMPPDRVVLITTGTQGEPMAALSRMSRGEHRSITLTSGDLIILSSSLIPGNEEAVYGVIDSLSKIGARVVTNAQARVHVSGHAYAGELLFLYNGVRPRNVMPVHGTWRHLRANAALAASTGVPPENIVLAENGVSVDLVAGRASISGAVTVGKMFVDGLITGDVGDATLGERLILSSGFVSITVVVHRGTGRPAGPAHLISRGFSEDPKALEPVAQKVERELEALAADNVTDPTRIAQAVRRTVGKWVGETYRRQPMIVPTVIEI.

Zn(2+) is bound by residues H81, H83, D85, H86, H148, and D170. A substrate-binding site is contributed by 371–375 (HVSGH). H397 contacts Zn(2+).

This sequence belongs to the metallo-beta-lactamase superfamily. RNA-metabolizing metallo-beta-lactamase-like family. Bacterial RNase J subfamily. In terms of assembly, homodimer. Zn(2+) is required as a cofactor.

It localises to the cytoplasm. Its function is as follows. An RNase that has endonuclease and 5'-3' exonuclease activity. The 5'-exonuclease activity acts on 5'-monophosphate but not 5'-triphosphate ends. Endonuclease activity can cleave within 4 nucleotides of the 5'-end of a triphosphorylated RNA. Plays the major role in pre-23S rRNA maturation, and a minor role in processing of pre-5S and pre-16S rRNA. This chain is Ribonuclease J, found in Mycolicibacterium smegmatis (strain ATCC 700084 / mc(2)155) (Mycobacterium smegmatis).